We begin with the raw amino-acid sequence, 412 residues long: Poly-beta-1,6-N-acetyl-D-glucosamine synthase (412 aa).

4 consecutive transmembrane segments (helical) span residues 7-28, 298-320, 332-354, and 364-386; these read LLFYPIFMSIYWIVGSIYYFFI, IASITWVYIVICYLSFLVITANI, IFFFSSFTMTFINIIQFTVALFI, and VGLIFLSWYPTLYWVINAAVVIM.

This sequence belongs to the glycosyltransferase 2 family.

It is found in the cell membrane. Its function is as follows. N-acetylglucosaminyltransferase that catalyzes the polymerization of single monomer units of UDP-N-acetylglucosamine to produce the linear homomer poly-beta-1,6-N-acetyl-D-glucosamine (PNAG, also referred to as PIA), a biofilm adhesin polysaccharide. Requires IcaD for full activity. This Staphylococcus epidermidis protein is Poly-beta-1,6-N-acetyl-D-glucosamine synthase (icaA).